The sequence spans 388 residues: P2X receptor E (388 aa).

Residues 1 to 28 (MNFRNIDWDSLFSYSTIKIVRIRDKRLG) lie on the Cytoplasmic side of the membrane. A helical membrane pass occupies residues 29 to 49 (ILHFAFLIGIILYIIVGTIFL). The Lumenal portion of the chain corresponds to 50 to 312 (QKKYLVLESP…QLGQFDFQTM (263 aa)). The interval 291–304 (RHGVRIIFIQTGQL) is pore-forming motif. Residues 313-333 (LLTFVSGIGLVTAASLIVDII) form a helical membrane-spanning segment. The Cytoplasmic segment spans residues 334–388 (ATRIMPQRSRYQELKFQDSSINNTQKTPTNDHTPLLKDNEDTINENSYQNNSYEK). The interval 349–388 (FQDSSINNTQKTPTNDHTPLLKDNEDTINENSYQNNSYEK) is disordered. Polar residues-rich tracts occupy residues 350-365 (QDSS…TNDH) and 377-388 (NENSYQNNSYEK).

The protein belongs to the P2X receptor family.

The protein localises to the contractile vacuole membrane. P2X receptors are ATP-gated ion channels that play a role in intracellular calcium signaling. Not required for the purinergic response to extracellular nucleotides. Not essential for osmoregulation. Inward currents evoked by intracellular ATP. ATP analog beta, gamma-imido-ATP is a weak partial agonist of p2xE. Exclusively selective for ATP over other nucleotides. Insensitive to copper and P2 receptor antagonists PPADS and suramin but strongly inhibited by sodium ions. More permeable to ammonium than either sodium or potassium ions and less permeable to choline. Permeable to calcium ions, but not chloride. The polypeptide is P2X receptor E (p2xE) (Dictyostelium discoideum (Social amoeba)).